Consider the following 561-residue polypeptide: MITIPITLRMLIAKYLCLLKPFWLRKNNKTSVLLIIIILAMILGVVKIQVWLNDWNNDFFNALSQKETDKLWQLVLWFPALLGIFVLISVNKTWLIKLLTIRWREWLTDYYLNRWFADKNYYFTQIYGEHKNTDNPDQRIAEDILLLISKTLSLSFGFIQSLSMLITFTVILWESAGTLSFTVGGTEWNIQGYMVYTVVLIVIGGTLFTHKVGKRIRPLNVEKQRSEATFRTNLVQHNKQAELIALSNAESLQRQELSDNFHTIKENWHRLMNRQRWLDYWQNIYSRSLSVLPYFLLLPQFISGQINLGGLMKSRQAFMLVSNNLSWFIYKYDELAELAAVIDRLYEFHQLTEQRPTNKPKNCQHAVQVADASIRTPDNKIILENLNFHVSPGKWLLLKGYSGAGKTTLLKTLSHCWPWFKGDISSPADSWYVSQTPLIKTGLLKEIICKALPLPVDDKSLSEVLHQVGLGKLAARIHDHDRWGDILSSGEKQRIALARLILRRPKWIFLDETTSHLEEQEAIRLLRLVREKLPTSGVIMVTHQPGVWNLADDICDISAVL.

Over Met1 to Thr3 the chain is Cytoplasmic. Residues Ile4–Leu24 form a helical membrane-spanning segment. At Arg25–Ser31 the chain is on the periplasmic side. Residues Val32 to Leu52 form a helical membrane-spanning segment. An ABC transmembrane type-1 domain is found at Ile35–Glu337. Residues Asn53–Lys70 lie on the Cytoplasmic side of the membrane. A helical membrane pass occupies residues Leu71–Asn91. Topologically, residues Lys92–Thr151 are periplasmic. Residues Leu152–Leu172 form a helical membrane-spanning segment. At Trp173–Glu187 the chain is on the cytoplasmic side. The chain crosses the membrane as a helical span at residues Trp188 to Phe208. The Periplasmic portion of the chain corresponds to Thr209–Ser290. The chain crosses the membrane as a helical span at residues Val291–Leu311. Residues Met312–Leu561 lie on the Cytoplasmic side of the membrane. The 195-residue stretch at Val367–Leu561 folds into the ABC transporter domain. Gly400–Thr407 lines the ATP pocket.

Belongs to the ABC transporter superfamily.

The protein resides in the cell inner membrane. The chain is Inner membrane ABC transporter ATP-binding protein YddA (yddA) from Escherichia coli (strain K12).